The chain runs to 78 residues: Small ribosomal subunit protein bS18 (78 aa).

It belongs to the bacterial ribosomal protein bS18 family. In terms of assembly, part of the 30S ribosomal subunit. Forms a tight heterodimer with protein bS6.

Its function is as follows. Binds as a heterodimer with protein bS6 to the central domain of the 16S rRNA, where it helps stabilize the platform of the 30S subunit. This chain is Small ribosomal subunit protein bS18, found in Nocardioides sp. (strain ATCC BAA-499 / JS614).